Consider the following 632-residue polypeptide: Chaperone protein HtpG (632 aa).

The segment at 1 to 339 is a; substrate-binding; it reads MAHETMSFQA…SADLPLNVSR (339 aa). The tract at residues 340 to 559 is b; that stretch reads EILQESRDVK…DNDMSGYLQR (220 aa). The tract at residues 560-632 is c; sequence MLKAAGQNAP…TNALLLSRAA (73 aa).

Belongs to the heat shock protein 90 family. In terms of assembly, homodimer.

It localises to the cytoplasm. In terms of biological role, molecular chaperone. Has ATPase activity. This Burkholderia ambifaria (strain ATCC BAA-244 / DSM 16087 / CCUG 44356 / LMG 19182 / AMMD) (Burkholderia cepacia (strain AMMD)) protein is Chaperone protein HtpG.